Reading from the N-terminus, the 238-residue chain is 2,3,4,5-tetrahydropyridine-2,6-dicarboxylate N-acetyltransferase (238 aa).

This sequence belongs to the transferase hexapeptide repeat family. DapH subfamily.

The enzyme catalyses (S)-2,3,4,5-tetrahydrodipicolinate + acetyl-CoA + H2O = L-2-acetamido-6-oxoheptanedioate + CoA. It participates in amino-acid biosynthesis; L-lysine biosynthesis via DAP pathway; LL-2,6-diaminopimelate from (S)-tetrahydrodipicolinate (acetylase route): step 1/3. In terms of biological role, catalyzes the transfer of an acetyl group from acetyl-CoA to tetrahydrodipicolinate. The chain is 2,3,4,5-tetrahydropyridine-2,6-dicarboxylate N-acetyltransferase from Pseudothermotoga lettingae (strain ATCC BAA-301 / DSM 14385 / NBRC 107922 / TMO) (Thermotoga lettingae).